Here is a 255-residue protein sequence, read N- to C-terminus: Hydroxyacylglutathione hydrolase (255 aa).

His-53, His-55, Asp-57, His-58, His-111, Asp-128, and His-166 together coordinate Zn(2+).

Belongs to the metallo-beta-lactamase superfamily. Glyoxalase II family. In terms of assembly, monomer. Zn(2+) serves as cofactor.

It catalyses the reaction an S-(2-hydroxyacyl)glutathione + H2O = a 2-hydroxy carboxylate + glutathione + H(+). Its pathway is secondary metabolite metabolism; methylglyoxal degradation; (R)-lactate from methylglyoxal: step 2/2. Thiolesterase that catalyzes the hydrolysis of S-D-lactoyl-glutathione to form glutathione and D-lactic acid. In Nitrosomonas eutropha (strain DSM 101675 / C91 / Nm57), this protein is Hydroxyacylglutathione hydrolase.